A 561-amino-acid chain; its full sequence is MQGLVENIKSSLAKALQVAIAGAVDKGQVNKLEIPEVIIEVPREKGHGDFATNLAMQLAKPAKMAPRKIAEAIIENLDLANTQVERVEIAGPGFINFYLQPSWVHGVIPMIIQEDRNYGRLELGDGQRVQVEFVSANPTGLLHMGNARGAALGDSLASILDFAGYRVSREYYINDAGNQIENFGKSLEVRYLQQLGQDIQLPEEGYHGEDIIDTVKGYINKNGRGLLDADQTTRRKTLAAYALQEKLTHIRNTLLDFGVVYDVWYSEQALHDSGAIQETLDELRQKGFIYEQENALWFKATAFGDEKDEVVVRSNGIPTYFAADIAYHKDKYKRGFDRVIDIWGADHHGHVNRMKGSMEALGHNRDNLQIILMQLVRLLRGGEVVRMSKRTGQFVTLEELVEEVGRDAARYFFVMRSPDSHLEFDLDLAKSQTNDNPVFYIQYAHARICSILRQLQEQGRPLPEIAAINPTVLKEEAELELLRKLADFPSEIAAAAEMMAPHRIARYLHDLAGLFHSFYNSHRVITENEAISEARLVLVQCVRIVLRNALGLLGLTAPEKM.

Positions 136–146 (ANPTGLLHMGN) match the 'HIGH' region motif.

Belongs to the class-I aminoacyl-tRNA synthetase family. Monomer.

The protein localises to the cytoplasm. It carries out the reaction tRNA(Arg) + L-arginine + ATP = L-arginyl-tRNA(Arg) + AMP + diphosphate. This chain is Arginine--tRNA ligase, found in Desulforamulus reducens (strain ATCC BAA-1160 / DSM 100696 / MI-1) (Desulfotomaculum reducens).